The chain runs to 615 residues: DNA mismatch repair protein MutL (615 aa).

The protein belongs to the DNA mismatch repair MutL/HexB family.

Functionally, this protein is involved in the repair of mismatches in DNA. It is required for dam-dependent methyl-directed DNA mismatch repair. May act as a 'molecular matchmaker', a protein that promotes the formation of a stable complex between two or more DNA-binding proteins in an ATP-dependent manner without itself being part of a final effector complex. The sequence is that of DNA mismatch repair protein MutL from Parabacteroides distasonis (strain ATCC 8503 / DSM 20701 / CIP 104284 / JCM 5825 / NCTC 11152).